Reading from the N-terminus, the 493-residue chain is Inosine-5'-monophosphate dehydrogenase (493 aa).

CBS domains follow at residues 97-155 (VIID…NAPI) and 159-219 (MTSE…AKDE). NAD(+)-binding positions include Asp-253 and 303–305 (GIG). K(+) contacts are provided by Gly-305 and Gly-307. Residue Ser-308 participates in IMP binding. Residue Cys-310 participates in K(+) binding. The Thioimidate intermediate role is filled by Cys-310. IMP is bound by residues 343-345 (DGG), 366-367 (GS), and 390-394 (YRGMG). The active-site Proton acceptor is Arg-406. Glu-421 provides a ligand contact to IMP. The K(+) site is built by Glu-475, Ser-476, and His-477.

It belongs to the IMPDH/GMPR family. As to quaternary structure, homotetramer. The cofactor is K(+).

It carries out the reaction IMP + NAD(+) + H2O = XMP + NADH + H(+). The protein operates within purine metabolism; XMP biosynthesis via de novo pathway; XMP from IMP: step 1/1. Mycophenolic acid (MPA) is a non-competitive inhibitor that prevents formation of the closed enzyme conformation by binding to the same site as the amobile flap. In contrast, mizoribine monophosphate (MZP) is a competitive inhibitor that induces the closed conformation. MPA is a potent inhibitor of mammalian IMPDHs but a poor inhibitor of the bacterial enzymes. MZP is a more potent inhibitor of bacterial IMPDH. Catalyzes the conversion of inosine 5'-phosphate (IMP) to xanthosine 5'-phosphate (XMP), the first committed and rate-limiting step in the de novo synthesis of guanine nucleotides, and therefore plays an important role in the regulation of cell growth. In Streptococcus pyogenes serotype M3 (strain ATCC BAA-595 / MGAS315), this protein is Inosine-5'-monophosphate dehydrogenase.